A 543-amino-acid chain; its full sequence is ATP synthase subunit alpha (543 aa).

174-181 (GDRQTGKT) provides a ligand contact to ATP.

This sequence belongs to the ATPase alpha/beta chains family. As to quaternary structure, F-type ATPases have 2 components, CF(1) - the catalytic core - and CF(0) - the membrane proton channel. CF(1) has five subunits: alpha(3), beta(3), gamma(1), delta(1), epsilon(1). CF(0) has three main subunits: a(1), b(2) and c(9-12). The alpha and beta chains form an alternating ring which encloses part of the gamma chain. CF(1) is attached to CF(0) by a central stalk formed by the gamma and epsilon chains, while a peripheral stalk is formed by the delta and b chains.

It localises to the cell membrane. The enzyme catalyses ATP + H2O + 4 H(+)(in) = ADP + phosphate + 5 H(+)(out). Functionally, produces ATP from ADP in the presence of a proton gradient across the membrane. The alpha chain is a regulatory subunit. The chain is ATP synthase subunit alpha from Bifidobacterium longum subsp. infantis (strain ATCC 15697 / DSM 20088 / JCM 1222 / NCTC 11817 / S12).